A 218-amino-acid chain; its full sequence is Ras-related protein YPT3 (218 aa).

20–27 (GDSGVGKS) is a GTP binding site. An Effector region motif is present at residues 42–50 (SKSTIGVEF). GTP is bound by residues 68-72 (DTAGQ) and 126-129 (NKSD). The segment at 186-205 (GDEGATSSAPPKGETINIKD) is disordered. Residues C215 and C216 are each lipidated (S-geranylgeranyl cysteine).

This sequence belongs to the small GTPase superfamily. Rab family. In terms of tissue distribution, its expression is weak in leaves, higher in stems and roots, but highest in petals, stigma and stamens.

It localises to the cell membrane. Protein transport. Probably involved in vesicular traffic. The protein is Ras-related protein YPT3 (YPT3) of Nicotiana plumbaginifolia (Leadwort-leaved tobacco).